Reading from the N-terminus, the 435-residue chain is ATP-dependent RNA helicase RhlB (435 aa).

The short motif at 9 to 37 is the Q motif element; sequence QKFADLGLNPQVVEGLEKKGFEFCTPIQA. Residues 40–219 form the Helicase ATP-binding domain; sequence LPVLLSGQDI…FEHMHNPEHV (180 aa). 53–60 provides a ligand contact to ATP; sequence AQTGTGKT. The DEAD box motif lies at 165–168; the sequence is DEAD. The Helicase C-terminal domain occupies 245-390; that stretch reads ALLQTLIEEE…VSDYDSSALI (146 aa). The disordered stretch occupies residues 395-435; the sequence is APVRTPSARNQQRRTNTGGARSGDRKSNNRRPRQPRQHKEA. Polar residues predominate over residues 401-413; the sequence is SARNQQRRTNTGG. Basic residues predominate over residues 422-435; it reads NNRRPRQPRQHKEA.

The protein belongs to the DEAD box helicase family. RhlB subfamily. As to quaternary structure, component of the RNA degradosome, which is a multiprotein complex involved in RNA processing and mRNA degradation.

It is found in the cytoplasm. It carries out the reaction ATP + H2O = ADP + phosphate + H(+). Its function is as follows. DEAD-box RNA helicase involved in RNA degradation. Has RNA-dependent ATPase activity and unwinds double-stranded RNA. This Vibrio vulnificus (strain YJ016) protein is ATP-dependent RNA helicase RhlB.